A 277-amino-acid chain; its full sequence is Pantothenate synthetase (277 aa).

ATP is bound at residue 26–33; the sequence is MGNLHEGH. Histidine 33 (proton donor) is an active-site residue. Glutamine 57 serves as a coordination point for (R)-pantoate. Residue glutamine 57 coordinates beta-alanine. 144 to 147 provides a ligand contact to ATP; it reads GKKD. Glutamine 150 is a (R)-pantoate binding site. ATP contacts are provided by residues glycine 173 and 181 to 184; that span reads LSSR.

This sequence belongs to the pantothenate synthetase family. As to quaternary structure, homodimer.

Its subcellular location is the cytoplasm. The catalysed reaction is (R)-pantoate + beta-alanine + ATP = (R)-pantothenate + AMP + diphosphate + H(+). The protein operates within cofactor biosynthesis; (R)-pantothenate biosynthesis; (R)-pantothenate from (R)-pantoate and beta-alanine: step 1/1. Its function is as follows. Catalyzes the condensation of pantoate with beta-alanine in an ATP-dependent reaction via a pantoyl-adenylate intermediate. The sequence is that of Pantothenate synthetase from Laribacter hongkongensis (strain HLHK9).